The following is a 515-amino-acid chain: 13S globulin seed storage protein (515 aa).

An N-terminal signal peptide occupies residues Met1–Ala22. Residues Ala23–Leu96 are igE-binding epitope. Cystine bridges form between Cys47–Cys80 and Cys123–Cys327. The 221-residue stretch at Leu52 to Ser272 folds into the Cupin type-1 1 domain. Positions Leu97 to Ala172 are igE-binding epitope with a very strong IgE-binding activity. Disordered stretches follow at residues Cys123–His156, Leu210–Asp241, and Pro295–Asn320. 3 stretches are compositionally biased toward basic and acidic residues: residues His141–His156, Gly217–Ser239, and Pro295–Ser316. 2 igE-binding epitope regions span residues Gly173–Ala248 and Asn249–Asn320. Residues Gln333–Tyr482 enclose the Cupin type-1 2 domain. Residues Arg347–Asn387 are igE-binding epitope with a strong IgE-binding activity. IgE-binding epitope stretches follow at residues Glu407–Gly457, Glu440–Ile476, and Asp475–Arg511.

It belongs to the 11S seed storage protein (globulins) family. In terms of assembly, homohexamer. Post-translationally, proteolytically processed from a single precursor to produce an acidic and a basic chain that are linked by a disulfide bond. As to expression, expressed in seeds (at protein level).

In terms of biological role, seed storage protein. The polypeptide is 13S globulin seed storage protein (Fagopyrum tataricum (Tartarian buckwheat)).